The sequence spans 260 residues: Carbonic anhydrase 3 (260 aa).

Ala2 carries the post-translational modification N-acetylalanine. The region spanning 3-259 is the Alpha-carbonic anhydrase domain; the sequence is KEWGYASHNG…VKGRVVRASF (257 aa). 5 positions are modified to phosphoserine: Ser29, Ser43, Ser48, Ser50, and Ser55. Residues 64–67 form an involved in proton transfer region; the sequence is KTCR. At Thr73 the chain carries Phosphothreonine. Zn(2+) contacts are provided by His94, His96, and His119. Tyr127 carries the post-translational modification Phosphotyrosine. Phosphothreonine is present on residues Thr129 and Thr176. S-glutathionyl cysteine is present on residues Cys182 and Cys187. 198 to 199 contacts substrate; the sequence is TT. The residue at position 216 (Thr216) is a Phosphothreonine. Ser219 bears the Phosphoserine mark.

This sequence belongs to the alpha-carbonic anhydrase family. Zn(2+) serves as cofactor. In terms of processing, S-thiolated both by thiol-disulfide exchange with glutathione disulfide and by oxyradical-initiated S-thiolation with reduced glutathione. S-glutathionylated in hepatocytes under oxidative stress. In terms of tissue distribution, expressed at lower levels in adipose tissue from animals that were either genetically obese or had experimentally induced obesity.

It is found in the cytoplasm. The enzyme catalyses hydrogencarbonate + H(+) = CO2 + H2O. Its activity is regulated as follows. Inhibited by acetazolamide. Reversible hydration of carbon dioxide. The chain is Carbonic anhydrase 3 from Mus musculus (Mouse).